The primary structure comprises 544 residues: Chaperonin GroEL (544 aa).

ATP-binding positions include 29-32 (TLGP), 86-90 (DGTTT), Gly-413, 476-478 (NAA), and Asp-492.

This sequence belongs to the chaperonin (HSP60) family. In terms of assembly, forms a cylinder of 14 subunits composed of two heptameric rings stacked back-to-back. Interacts with the co-chaperonin GroES.

The protein localises to the cytoplasm. The protein resides in the secreted. It catalyses the reaction ATP + H2O + a folded polypeptide = ADP + phosphate + an unfolded polypeptide.. Functionally, together with its co-chaperonin GroES, plays an essential role in assisting protein folding. The GroEL-GroES system forms a nano-cage that allows encapsulation of the non-native substrate proteins and provides a physical environment optimized to promote and accelerate protein folding. This chain is Chaperonin GroEL, found in Bacillus subtilis (strain 168).